A 148-amino-acid polypeptide reads, in one-letter code: L-alanine exporter AlaE (148 aa).

4 helical membrane-spanning segments follow: residues 18 to 38 (FALV…ISGM), 49 to 69 (VSIP…DAFI), 88 to 108 (LLAY…SVGA), and 115 to 135 (TAVA…GYFL).

The protein belongs to the AlaE exporter family.

The protein resides in the cell inner membrane. Functionally, exports L-alanine. This Yersinia enterocolitica subsp. palearctica serotype O:3 (strain DSM 13030 / CIP 106945 / Y11) protein is L-alanine exporter AlaE.